The following is a 274-amino-acid chain: Protein LNK4 (274 aa).

Residues 209-249 (NSQQKSDSNSDEFLEDRTRETEFETKLNRQSRGQSHIQQDG) form a disordered region. The span at 223–235 (EDRTRETEFETKL) shows a compositional bias: basic and acidic residues. The segment covering 236 to 249 (NRQSRGQSHIQQDG) has biased composition (polar residues).

As to quaternary structure, interacts with REV8.

Its function is as follows. Probable transcriptional coactivator. This is Protein LNK4 from Arabidopsis thaliana (Mouse-ear cress).